The sequence spans 351 residues: Glycerol-1-phosphate dehydrogenase [NAD(P)+] (351 aa).

Residues Gly97–Asp101 and Thr119–Ser122 each bind NAD(+). Residue Asp124 participates in substrate binding. An NAD(+)-binding site is contributed by Ser128. Asp171 contacts substrate. Residues Asp171 and His251 each contribute to the Zn(2+) site. His255 serves as a coordination point for substrate. A Zn(2+)-binding site is contributed by His267.

The protein belongs to the glycerol-1-phosphate dehydrogenase family. As to quaternary structure, homodimer. It depends on Zn(2+) as a cofactor.

The protein localises to the cytoplasm. It catalyses the reaction sn-glycerol 1-phosphate + NAD(+) = dihydroxyacetone phosphate + NADH + H(+). The catalysed reaction is sn-glycerol 1-phosphate + NADP(+) = dihydroxyacetone phosphate + NADPH + H(+). It participates in membrane lipid metabolism; glycerophospholipid metabolism. Catalyzes the NAD(P)H-dependent reduction of dihydroxyacetonephosphate (DHAP or glycerone phosphate) to glycerol 1-phosphate (G1P). The G1P thus generated is used as the glycerophosphate backbone of phospholipids in the cellular membranes of Archaea. The polypeptide is Glycerol-1-phosphate dehydrogenase [NAD(P)+] (Metallosphaera sedula (strain ATCC 51363 / DSM 5348 / JCM 9185 / NBRC 15509 / TH2)).